A 448-amino-acid polypeptide reads, in one-letter code: MCYYRYVQVHSIWRRFCALGLLVPFLLLLFSCTNTVGYGVLQWSLPDLGLSTGDILPVYVRSNVSQVYIVEIQKKKVELPFWQLKLCRTKKEALQYAERLREYRYSYATSVLDGLPLREGPENTAPQVYRLREGQAVKLLWKGTGKAVYRGENRLEGDWFKVMTEDGTTGWCFSHGLSLFDERESRPTVRETDDLARDRDLQHVLNSAWYPEYYRTMVEQRRIDLEKMASGWGLFVGEKKGLARIELPDAHYAFPYSRLVKTGSNGYLFDGSSLSIYVRDAHTLAAQFTDEAGRLRIERFVTLEKTPEEIIAEEQLRRSALLEHVCTPGLRLHSEIYGTLSFTERNVFTWTGARALSPALIPAGAGSTGRVALRCFIDQSLKSEYEGVLSFDFDSAQEWVHFLYLRTPGGLKLEHIDSTHLKDATVLRRSVSPVVLYFAPEGHAEPQP.

The helical transmembrane segment at 19–41 threads the bilayer; it reads LGLLVPFLLLLFSCTNTVGYGVL. An SH3b domain is found at 105–181; the sequence is YSYATSVLDG…CFSHGLSLFD (77 aa).

Its subcellular location is the membrane. This is an uncharacterized protein from Treponema pallidum (strain Nichols).